Reading from the N-terminus, the 663-residue chain is Epithelial sodium channel subunit gamma-2 (663 aa).

The Cytoplasmic portion of the chain corresponds to 1–55 (MSNSGKKLTQKLKKNLPVTGPQAPTLYELMQWYCLNTNTHGCRRIVVSKGRLRRW). A helical transmembrane segment spans residues 56 to 76 (IWIVLTLIAVALIFWQCALLL). Residues 77 to 544 (MTYYSVSASI…GGQLGLWMSC (468 aa)) lie on the Extracellular side of the membrane. 8 disulfide bridges follow: Cys-101–Cys-286, Cys-209–Cys-217, Cys-263–Cys-270, Cys-375–Cys-460, Cys-397–Cys-456, Cys-401–Cys-452, Cys-410–Cys-437, and Cys-412–Cys-426. Residues 545 to 565 (SMVCGLEIVEVFFIDSFWVIL) form a helical membrane-spanning segment. The Cytoplasmic portion of the chain corresponds to 566 to 663 (RQKWHKLCNW…IDSDEDVERF (98 aa)).

Belongs to the amiloride-sensitive sodium channel (TC 1.A.6) family. SCNN1G subfamily. Component of the heterotrimeric epithelial sodium channel (ENaC) composed of an alpha/SCNN1A, a beta/SCNN1B and a gamma/SCNN1G subunit.

The protein localises to the apical cell membrane. The catalysed reaction is Na(+)(in) = Na(+)(out). With respect to regulation, originally identified and characterized by its inhibition by the diuretic drug amiloride. In terms of biological role, this is one of the three pore-forming subunits of the heterotrimeric epithelial sodium channel (ENaC), a critical regulator of sodium balance and fluid homeostasis. ENaC operates in epithelial tissues, where it mediates the electrodiffusion of sodium ions from extracellular fluid through the apical membrane of cells, with water following osmotically. This Xenopus laevis (African clawed frog) protein is Epithelial sodium channel subunit gamma-2 (scnn1g-b).